The primary structure comprises 406 residues: Arginine biosynthesis bifunctional protein ArgJ (406 aa).

Threonine 152, lysine 179, threonine 190, glutamate 277, asparagine 401, and serine 406 together coordinate substrate. Catalysis depends on threonine 190, which acts as the Nucleophile.

The protein belongs to the ArgJ family. Heterotetramer of two alpha and two beta chains.

The protein resides in the cytoplasm. It carries out the reaction N(2)-acetyl-L-ornithine + L-glutamate = N-acetyl-L-glutamate + L-ornithine. The catalysed reaction is L-glutamate + acetyl-CoA = N-acetyl-L-glutamate + CoA + H(+). Its pathway is amino-acid biosynthesis; L-arginine biosynthesis; L-ornithine and N-acetyl-L-glutamate from L-glutamate and N(2)-acetyl-L-ornithine (cyclic): step 1/1. It functions in the pathway amino-acid biosynthesis; L-arginine biosynthesis; N(2)-acetyl-L-ornithine from L-glutamate: step 1/4. Its function is as follows. Catalyzes two activities which are involved in the cyclic version of arginine biosynthesis: the synthesis of N-acetylglutamate from glutamate and acetyl-CoA as the acetyl donor, and of ornithine by transacetylation between N(2)-acetylornithine and glutamate. This chain is Arginine biosynthesis bifunctional protein ArgJ, found in Neisseria gonorrhoeae (strain ATCC 700825 / FA 1090).